The following is a 425-amino-acid chain: Aspyridones cluster regulator (425 aa).

The segment at residues 100–127 (CVDCRASKTRCTGEPEGCKRCTFRKRPC) is a DNA-binding region (zn(2)-C6 fungal-type). Residues 132 to 159 (LRRSNTTQHGEQIEASSSTFTMSDEQGS) are disordered. Polar residues predominate over residues 133 to 157 (RRSNTTQHGEQIEASSSTFTMSDEQ).

The protein resides in the nucleus. Functionally, transcription factor involved in regulation of gene cluster that mediates the biosynthesis of aphidicolin. This is Aspyridones cluster regulator (TF) from Neocamarosporium betae (Beet black rot fungus).